Here is a 112-residue protein sequence, read N- to C-terminus: Large ribosomal subunit protein bL17 (112 aa).

It belongs to the bacterial ribosomal protein bL17 family. As to quaternary structure, part of the 50S ribosomal subunit. Contacts protein L32.

The protein is Large ribosomal subunit protein bL17 of Moorella thermoacetica (strain ATCC 39073 / JCM 9320).